The following is a 43-amino-acid chain: Protein PsbN (43 aa).

The helical transmembrane segment at 7-27 threads the bilayer; the sequence is ITIFLSCFLVGVTGYALYTAF.

Belongs to the PsbN family.

The protein localises to the plastid. The protein resides in the chloroplast thylakoid membrane. Functionally, may play a role in photosystem I and II biogenesis. This chain is Protein PsbN, found in Klebsormidium bilatum (Filamentous green alga).